The primary structure comprises 738 residues: Protein Aster-B (738 aa).

Residues 1–81 are disordered; sequence MKGFKLSCTA…SGGKNSKKSQ (81 aa). Over residues 8–19 the composition is skewed to polar residues; that stretch reads CTASNSNRSTPA. Residues Ser28 and Ser30 each carry the phosphoserine modification. The segment covering 41-51 has biased composition (basic and acidic residues); it reads MVEKGSDHSSD. Low complexity predominate over residues 59 to 70; the sequence is QGVQRSCSSQSG. A GRAM domain is found at 96-163; sequence EDFRKLFKQL…KDICSMTKEK (68 aa). Residues 254 to 301 form a disordered region; the sequence is EENEVNDSSSKSSIETKPDASPQLPKKSITNSTLTSTGSSEAPVSFDG. A compositionally biased stretch (polar residues) spans 259-268; it reads NDSSSKSSIE. Ser274 carries the post-translational modification Phosphoserine. The span at 281-295 shows a compositional bias: polar residues; the sequence is SITNSTLTSTGSSEA. The 172-residue stretch at 372–543 folds into the VASt domain; that stretch reads SGRQYVNEVF…ELAKTESTYL (172 aa). Phosphotyrosine is present on Tyr389. Residues 544–566 are disordered; sequence AEMHRQSPKEKASKTTTVRRRKR. Over residues 545–556 the composition is skewed to basic and acidic residues; it reads EMHRQSPKEKAS. Residues Ser550 and Ser581 each carry the phosphoserine modification. Thr584, Thr585, and Thr587 each carry phosphothreonine. A helical transmembrane segment spans residues 623–643; the sequence is LLLVISCVICFSLVLLVILNM.

The protein resides in the endoplasmic reticulum membrane. It localises to the cell membrane. Functionally, cholesterol transporter that mediates non-vesicular transport of cholesterol from the plasma membrane (PM) to the endoplasmic reticulum (ER). Contains unique domains for binding cholesterol and the PM, thereby serving as a molecular bridge for the transfer of cholesterol from the PM to the ER. Plays a crucial role in cholesterol homeostasis in the adrenal gland and has the unique ability to localize to the PM based on the level of membrane cholesterol. In lipid-poor conditions localizes to the ER membrane and in response to excess cholesterol in the PM is recruited to the endoplasmic reticulum-plasma membrane contact sites (EPCS) which is mediated by the GRAM domain. At the EPCS, the sterol-binding VASt/ASTER domain binds to the cholesterol in the PM and facilitates its transfer from the PM to ER. In Homo sapiens (Human), this protein is Protein Aster-B (GRAMD1B).